Here is a 476-residue protein sequence, read N- to C-terminus: MGRKEEDDCSSWKKQTTNIRKTFIFMEVLGSGAFSEVFLVKQRLTGKLFALKCIKKSPAFRDSSLENEIAVLKKIKHENIVTLEDIYESTTHYYLVMQLVSGGELFDRILERGVYTEKDASLVIQQVLSAVKYLHENGIVHRDLKPENLLYLTPEENSKIMITDFGLSKMEQNGIMSTACGTPGYVAPEVLAQKPYSKAVDCWSIGVITYILLCGYPPFYEETESKLFEKIKEGYYEFESPFWDDISESAKDFICHLLEKDPNERYTCEKALSHPWIDGNTALHRDIYPSVSLQIQKNFAKSKWRQAFNAAAVVHHMRKLHMNLHSPGVRPEVENRPPETQASETSRPSSPEITITEAPVLDHSVALPALTQLPCQHGRRPTAPGGRSLNCLVNGSLHISSSLVPMHQGSLAAGPCGCCSSCLNIGSKGKSSYCSEPTLLKKANKKQNFKSEVMVPVKASGSSHCRAGQTGVCLIM.

One can recognise a Protein kinase domain in the interval 23-277 (FIFMEVLGSG…CEKALSHPWI (255 aa)). ATP-binding positions include 29 to 37 (LGSGAFSEV) and Lys52. The active-site Proton acceptor is Asp143. The segment at 277-317 (IDGNTALHRDIYPSVSLQIQKNFAKSKWRQAFNAAAVVHHM) is autoinhibitory domain. A calmodulin-binding region spans residues 297-318 (KNFAKSKWRQAFNAAAVVHHMR). The tract at residues 325–352 (HSPGVRPEVENRPPETQASETSRPSSPE) is disordered. A compositionally biased stretch (polar residues) spans 338-352 (PETQASETSRPSSPE).

This sequence belongs to the protein kinase superfamily. CAMK Ser/Thr protein kinase family. CaMK subfamily. May be prenylated on Cys-473. As to expression, mainly expressed in brain with small amounts in skeletal muscles, kidney, spleen and liver. Strongly expressed in forebrain neocortex, striatum and limbic system.

The protein resides in the cytoplasm. The protein localises to the golgi apparatus membrane. It is found in the cell membrane. It carries out the reaction L-seryl-[protein] + ATP = O-phospho-L-seryl-[protein] + ADP + H(+). It catalyses the reaction L-threonyl-[protein] + ATP = O-phospho-L-threonyl-[protein] + ADP + H(+). Its activity is regulated as follows. Activated by Ca(2+)/calmodulin. Binding of calmodulin is thought to result in a conformational change and leads to activation through phosphorylation by CAMKK1. Calcium/calmodulin-dependent protein kinase belonging to a proposed calcium-triggered signaling cascade. In vitro phosphorylates transcription factor CREB1. This chain is Calcium/calmodulin-dependent protein kinase type 1G (CAMK1G), found in Homo sapiens (Human).